Reading from the N-terminus, the 84-residue chain is Hepcidin (84 aa).

The signal sequence occupies residues 1 to 24; the sequence is MALSSQIWAACLLLLLLLASLTSG. Positions 25–54 are excised as a propeptide; the sequence is SVFPQQTGQLAELQPQDRAGARAGWTPMLQ. 3 cysteine pairs are disulfide-bonded: Cys-69/Cys-72, Cys-70/Cys-78, and Cys-73/Cys-81.

The protein belongs to the hepcidin family. As to quaternary structure, interacts with SLC40A1; this interaction promotes SLC40A1 rapid ubiquitination.

It is found in the secreted. In terms of biological role, liver-produced hormone that constitutes the main circulating regulator of iron absorption and distribution across tissues. Acts by promoting endocytosis and degradation of ferroportin/SLC40A1, leading to the retention of iron in iron-exporting cells and decreased flow of iron into plasma. Controls the major flows of iron into plasma: absorption of dietary iron in the intestine, recycling of iron by macrophages, which phagocytose old erythrocytes and other cells, and mobilization of stored iron from hepatocytes. Its function is as follows. Has strong antimicrobial activity against E.coli ML35P N.cinerea and weaker against S.epidermidis, S.aureus and group b streptococcus bacteria. Active against the fungus C.albicans. No activity against P.aeruginosa. The sequence is that of Hepcidin (HAMP) from Pongo abelii (Sumatran orangutan).